A 257-amino-acid chain; its full sequence is Hydroxyacylglutathione hydrolase (257 aa).

7 residues coordinate Zn(2+): His54, His56, Asp58, His59, His113, Asp137, and His175.

Belongs to the metallo-beta-lactamase superfamily. Glyoxalase II family. As to quaternary structure, monomer. Zn(2+) serves as cofactor.

It carries out the reaction an S-(2-hydroxyacyl)glutathione + H2O = a 2-hydroxy carboxylate + glutathione + H(+). The protein operates within secondary metabolite metabolism; methylglyoxal degradation; (R)-lactate from methylglyoxal: step 2/2. In terms of biological role, thiolesterase that catalyzes the hydrolysis of S-D-lactoyl-glutathione to form glutathione and D-lactic acid. The polypeptide is Hydroxyacylglutathione hydrolase (Rippkaea orientalis (strain PCC 8801 / RF-1) (Cyanothece sp. (strain PCC 8801))).